Reading from the N-terminus, the 277-residue chain is Sulfur carrier protein FdhD (277 aa).

The Cysteine persulfide intermediate role is filled by Cys-121. Mo-bis(molybdopterin guanine dinucleotide) is bound at residue 260-265; it reads FCKPGR.

It belongs to the FdhD family.

The protein localises to the cytoplasm. Its function is as follows. Required for formate dehydrogenase (FDH) activity. Acts as a sulfur carrier protein that transfers sulfur from IscS to the molybdenum cofactor prior to its insertion into FDH. The polypeptide is Sulfur carrier protein FdhD (Escherichia coli O81 (strain ED1a)).